Reading from the N-terminus, the 156-residue chain is Small ribosomal subunit protein uS7 (156 aa).

The protein belongs to the universal ribosomal protein uS7 family. Part of the 30S ribosomal subunit. Contacts proteins S9 and S11.

One of the primary rRNA binding proteins, it binds directly to 16S rRNA where it nucleates assembly of the head domain of the 30S subunit. Is located at the subunit interface close to the decoding center, probably blocks exit of the E-site tRNA. This is Small ribosomal subunit protein uS7 from Geobacter sulfurreducens (strain ATCC 51573 / DSM 12127 / PCA).